Reading from the N-terminus, the 100-residue chain is Urease subunit gamma (100 aa).

It belongs to the urease gamma subunit family. In terms of assembly, heterotrimer of UreA (gamma), UreB (beta) and UreC (alpha) subunits. Three heterotrimers associate to form the active enzyme.

It is found in the cytoplasm. The catalysed reaction is urea + 2 H2O + H(+) = hydrogencarbonate + 2 NH4(+). Its pathway is nitrogen metabolism; urea degradation; CO(2) and NH(3) from urea (urease route): step 1/1. The polypeptide is Urease subunit gamma (Marinomonas sp. (strain MWYL1)).